The primary structure comprises 335 residues: SAM pointed domain-containing Ets transcription factor (335 aa).

Positions 1-20 (MGSASPGLSSVSPSHLLLPP) are enriched in low complexity. Disordered regions lie at residues 1–25 (MGSA…TVSR) and 75–100 (AKAP…DSQA). The PNT domain occupies 129–213 (EVLKDIETAC…AHLDIWKSAA (85 aa)). The segment at residues 249–332 (IHLWQFLKEL…ISQRLVYQFV (84 aa)) is a DNA-binding region (ETS).

The protein belongs to the ETS family. In terms of assembly, interacts with the DNA-binding domain of the androgen receptor. Interacts with NKX3-1. In terms of tissue distribution, expressed in a very restricted set of primarily hormone-regulated epithelial tissues with particularly high expression in the prostate gland. Significantly lower expression is seen in other hormone regulated tissues such as mammary gland, salivary gland, and ovary. Expressed in prostate carcinoma cells.

It is found in the nucleus. Its function is as follows. May function as an androgen-independent transactivator of the prostate-specific antigen (PSA) promoter. Binds to 5'-GGAT-3' DNA sequences. May play a role in the regulation of the prostate gland and/or prostate cancer development. Acts as a transcriptional activator for SERPINB5 promoter. This is SAM pointed domain-containing Ets transcription factor (SPDEF) from Homo sapiens (Human).